The primary structure comprises 352 residues: AP2/ERF and B3 domain-containing transcription factor At1g51120 (352 aa).

The segment at 1–20 (MDEMSNVAKTTTETSGLTDS) is disordered. Residues 7-20 (VAKTTTETSGLTDS) are compositionally biased toward polar residues. Positions 46–103 (KFKGVVQQQNGHWGAQIYADHRRIWLGTFKSAHEAAAAYDSASIKLRSFDANSHRNFP) form a DNA-binding region, AP2/ERF. Positions 178-297 (FQKELTPSDV…KTFLMIDVHH (120 aa)) form a DNA-binding region, TF-B3.

The protein belongs to the AP2/ERF transcription factor family. RAV subfamily.

It localises to the nucleus. Its function is as follows. Probably acts as a transcriptional activator. Binds to the GCC-box pathogenesis-related promoter element. May be involved in the regulation of gene expression by stress factors and by components of stress signal transduction pathways. This chain is AP2/ERF and B3 domain-containing transcription factor At1g51120, found in Arabidopsis thaliana (Mouse-ear cress).